Reading from the N-terminus, the 467-residue chain is Asparagine--tRNA ligase (467 aa).

The protein belongs to the class-II aminoacyl-tRNA synthetase family. In terms of assembly, homodimer.

The protein resides in the cytoplasm. It catalyses the reaction tRNA(Asn) + L-asparagine + ATP = L-asparaginyl-tRNA(Asn) + AMP + diphosphate + H(+). The sequence is that of Asparagine--tRNA ligase from Legionella pneumophila (strain Lens).